A 309-amino-acid chain; its full sequence is Manganese-dependent inorganic pyrophosphatase (309 aa).

Positions 9, 13, 15, 75, 97, and 149 each coordinate Mn(2+).

As to quaternary structure, homodimer. Mn(2+) serves as cofactor.

It is found in the cytoplasm. The enzyme catalyses diphosphate + H2O = 2 phosphate + H(+). This chain is Manganese-dependent inorganic pyrophosphatase (ppaC), found in Bacillus subtilis (strain 168).